The chain runs to 562 residues: Aureusidin synthase (562 aa).

2 disulfide bridges follow: cysteine 71-cysteine 86 and cysteine 85-cysteine 148. Positions 147, 168, 177, 301, 305, and 335 each coordinate Cu cation. Residues 151–168 (CAGAYNQAGFTNLKLQIH) constitute a cross-link (2'-(S-cysteinyl)-histidine (Cys-His)).

The protein belongs to the tyrosinase family. Monomer. The cofactor is Cu(2+). Glycosylated. In terms of processing, contains probably N- and C-terminal propeptides. Expressed in petals. Not detected in stems and leaves.

It localises to the vacuole lumen. It catalyses the reaction 2',4,4',6'-tetrahydroxychalcone 4'-O-beta-D-glucoside + O2 = aureusidin 6-O-beta-glucoside + H2O. The enzyme catalyses 2 2',3,4,4',6'-pentahydroxychalcone 4'-O-beta-D-glucoside + O2 + 2 H(+) = 2 aureusidin 6-O-beta-glucoside + 2 H2O. It carries out the reaction 2',3,4,4',6'-pentahydroxychalcone 4'-O-beta-D-glucoside + O2 + H(+) = bracteatin 6-O-beta-glucoside + H2O. With respect to regulation, h(2)O(2) activates the 3-hydroxylation and oxidative cyclization of tetrahydroxychalcone but inhibits reaction with pentahydroxychalcone. Inhibited by phenylthiourea. Involved in the biosynthesis of aurones, plant flavonoids that provide yellow coloration to flowers. Can use tetrahydroxychalcone (THC), pentahydroxychalcone (PHC), THC 4'-glucoside and PHC 4'-glucoside as substrates, but not 2'-hydroxychalcone, 4-hydroxychalcone, PHC 3-glucoside, 2',6'-dihydroxy-4,4'-dimethoxychalcone, naringenin, eriodictyol and 4,4',6-trihydroxyaurone. Can also produce bracteatin from PHC. This Antirrhinum majus (Garden snapdragon) protein is Aureusidin synthase (AS1).